Here is a 248-residue protein sequence, read N- to C-terminus: Probable transcriptional regulatory protein Desal_2886 (248 aa).

Residues M1–R21 form a disordered region.

Belongs to the TACO1 family.

The protein localises to the cytoplasm. In Maridesulfovibrio salexigens (strain ATCC 14822 / DSM 2638 / NCIMB 8403 / VKM B-1763) (Desulfovibrio salexigens), this protein is Probable transcriptional regulatory protein Desal_2886.